The primary structure comprises 129 residues: Tumor necrosis factor receptor superfamily member 12A (129 aa).

The N-terminal stretch at 1-27 is a signal peptide; that stretch reads MARGSLRRLLRLLVLGLWLALLRSVAG. Over 28-80 the chain is Extracellular; the sequence is EQAPGTAPCSRGSSWSADLDKCMDCASCRARPHSDFCLGCAAAPPAPFRLLWP. 3 disulfide bridges follow: Cys36/Cys49, Cys52/Cys67, and Cys55/Cys64. The stretch at 36–67 is one TNFR-Cys; atypical repeat; the sequence is CSRGSSWSADLDKCMDCASCRARPHSDFCLGC. Residues 81–101 traverse the membrane as a helical segment; the sequence is ILGGALSLTFVLGLLSGFLVW. The Cytoplasmic segment spans residues 102-129; the sequence is RRCRRREKFTTPIEETGGEGCPAVALIQ.

Associates with TRAF1 and TRAF2, and probably also with TRAF3. Highly expressed in heart, placenta and kidney. Intermediate expression in lung, skeletal muscle and pancreas.

It localises to the membrane. Functionally, receptor for TNFSF12/TWEAK. Weak inducer of apoptosis in some cell types. Promotes angiogenesis and the proliferation of endothelial cells. May modulate cellular adhesion to matrix proteins. This chain is Tumor necrosis factor receptor superfamily member 12A (TNFRSF12A), found in Homo sapiens (Human).